A 247-amino-acid chain; its full sequence is Chymase (247 aa).

The signal sequence occupies residues 1-19 (MLLLPLPLLLLFLCSRAEA). Residues 20-21 (GE) constitute a propeptide, activation peptide. The region spanning 22 to 245 (IIGGTECKPH…YRPWINKILQ (224 aa)) is the Peptidase S1 domain. The cysteines at positions 51 and 67 are disulfide-linked. The active-site Charge relay system is the His-66. Residues Asn-80 and Asn-103 are each glycosylated (N-linked (GlcNAc...) asparagine). The Charge relay system role is filled by Asp-110. 2 cysteine pairs are disulfide-bonded: Cys-144–Cys-209 and Cys-175–Cys-188. Ser-203 acts as the Charge relay system in catalysis.

It belongs to the peptidase S1 family. Granzyme subfamily.

The protein localises to the secreted. It localises to the cytoplasmic granule. It carries out the reaction Preferential cleavage: Phe-|-Xaa &gt; Tyr-|-Xaa &gt; Trp-|-Xaa &gt; Leu-|-Xaa.. Functionally, major secreted protease of mast cells with suspected roles in vasoactive peptide generation, extracellular matrix degradation, and regulation of gland secretion. The polypeptide is Chymase (CMA1) (Papio hamadryas (Hamadryas baboon)).